Here is a 242-residue protein sequence, read N- to C-terminus: Glucosamine-6-phosphate deaminase (242 aa).

The Proton acceptor; for enolization step role is filled by Asp-67. Catalysis depends on Asn-136, which acts as the For ring-opening step. The Proton acceptor; for ring-opening step role is filled by His-138. Catalysis depends on Glu-143, which acts as the For ring-opening step.

It belongs to the glucosamine/galactosamine-6-phosphate isomerase family. NagB subfamily.

It catalyses the reaction alpha-D-glucosamine 6-phosphate + H2O = beta-D-fructose 6-phosphate + NH4(+). Its pathway is amino-sugar metabolism; N-acetylneuraminate degradation; D-fructose 6-phosphate from N-acetylneuraminate: step 5/5. Its function is as follows. Catalyzes the reversible isomerization-deamination of glucosamine 6-phosphate (GlcN6P) to form fructose 6-phosphate (Fru6P) and ammonium ion. The polypeptide is Glucosamine-6-phosphate deaminase (Alkaliphilus metalliredigens (strain QYMF)).